Reading from the N-terminus, the 492-residue chain is 2-succinylbenzoate--CoA ligase (492 aa).

This sequence belongs to the ATP-dependent AMP-binding enzyme family. MenE subfamily.

It catalyses the reaction 2-succinylbenzoate + ATP + CoA = 2-succinylbenzoyl-CoA + AMP + diphosphate. Its pathway is quinol/quinone metabolism; 1,4-dihydroxy-2-naphthoate biosynthesis; 1,4-dihydroxy-2-naphthoate from chorismate: step 5/7. The protein operates within quinol/quinone metabolism; menaquinone biosynthesis. Its function is as follows. Converts 2-succinylbenzoate (OSB) to 2-succinylbenzoyl-CoA (OSB-CoA). The protein is 2-succinylbenzoate--CoA ligase of Staphylococcus aureus (strain bovine RF122 / ET3-1).